We begin with the raw amino-acid sequence, 356 residues long: Glutamine synthetase (356 aa).

A GS beta-grasp domain is found at 19-99; the sequence is VIAEYIWIGG…VICDTYTPAG (81 aa). Residues 106-356 enclose the GS catalytic domain; that stretch reads KRHGAAKIFS…IAETTLLWKP (251 aa).

Belongs to the glutamine synthetase family. In terms of assembly, homooctamer. In terms of tissue distribution, found at highest levels in root nodules.

The protein resides in the cytoplasm. It carries out the reaction L-glutamate + NH4(+) + ATP = L-glutamine + ADP + phosphate + H(+). This Alnus glutinosa (European alder) protein is Glutamine synthetase (GLN1).